The chain runs to 249 residues: Triosephosphate isomerase (249 aa).

Residues Asn12 and Lys14 each coordinate substrate. Lys14 is modified (N6-acetyllysine). Tyr68 is modified (3'-nitrotyrosine). Ser80 is modified (phosphoserine). His96 serves as the catalytic Electrophile. Residue Ser106 is modified to Phosphoserine. Residue Lys142 forms a Glycyl lysine isopeptide (Lys-Gly) (interchain with G-Cter in SUMO1) linkage. Lys149 bears the N6-succinyllysine mark. Residue Lys156 is modified to N6-acetyllysine; alternate. N6-succinyllysine; alternate is present on Lys156. Ser159 bears the Phosphoserine mark. Glu166 functions as the Proton acceptor in the catalytic mechanism. A Phosphothreonine modification is found at Thr173. The residue at position 194 (Lys194) is an N6-acetyllysine; alternate. Lys194 carries the N6-succinyllysine; alternate modification. Position 194 is an N6-methyllysine; alternate (Lys194). Ser198 is modified (phosphoserine). Tyr209 is subject to 3'-nitrotyrosine. A Phosphoserine modification is found at Ser212. Thr214 carries the post-translational modification Phosphothreonine. Ser223 carries the phosphoserine modification. N6-acetyllysine is present on Lys238.

This sequence belongs to the triosephosphate isomerase family. In terms of assembly, homodimer.

The protein resides in the cytoplasm. It carries out the reaction dihydroxyacetone phosphate = methylglyoxal + phosphate. The enzyme catalyses D-glyceraldehyde 3-phosphate = dihydroxyacetone phosphate. It participates in carbohydrate degradation; glycolysis; D-glyceraldehyde 3-phosphate from glycerone phosphate: step 1/1. Its pathway is carbohydrate biosynthesis; gluconeogenesis. In terms of biological role, triosephosphate isomerase is an extremely efficient metabolic enzyme that catalyzes the interconversion between dihydroxyacetone phosphate (DHAP) and D-glyceraldehyde-3-phosphate (G3P) in glycolysis and gluconeogenesis. It is also responsible for the non-negligible production of methylglyoxal a reactive cytotoxic side-product that modifies and can alter proteins, DNA and lipids. The sequence is that of Triosephosphate isomerase (TPI1) from Canis lupus familiaris (Dog).